The following is a 133-amino-acid chain: Small ribosomal subunit protein uS8 (133 aa).

The protein belongs to the universal ribosomal protein uS8 family. In terms of assembly, part of the 30S ribosomal subunit. Contacts proteins S5 and S12.

In terms of biological role, one of the primary rRNA binding proteins, it binds directly to 16S rRNA central domain where it helps coordinate assembly of the platform of the 30S subunit. The protein is Small ribosomal subunit protein uS8 of Salinibacter ruber (strain DSM 13855 / M31).